A 541-amino-acid polypeptide reads, in one-letter code: Atlastin-3 (541 aa).

The tract at residues 1–22 (MLSPQRTAAVASRGAGDAMENG) is disordered. The segment at 1–25 (MLSPQRTAAVASRGAGDAMENGKPG) is N-terminal hypervariable region (HVR). The Cytoplasmic portion of the chain corresponds to 1-445 (MLSPQRTAAV…NVFSTFRTPA (445 aa)). The 249-residue stretch at 57–305 (DLDVVVVSVA…LIPYVLNPSK (249 aa)) folds into the GB1/RHD3-type G domain. Residues Arg-70, Lys-71, Gly-72, Lys-73, Ser-74, Phe-75, and Arg-109 each coordinate GDP. A Mg(2+)-binding site is contributed by Asp-142. GDP-binding residues include Arg-213, Asp-214, Val-272, and Ser-275. Residues 343-434 (MLQATAEANN…YENFCKHNGS (92 aa)) form a 3HB (three-helix bundle) domain region. Lys-391 is subject to N6-acetyllysine. Residues 446 to 466 (VLFTGIAALYIASGFTGFIGL) form a helical membrane-spanning segment. Glu-467 is a topological domain (lumenal). Residues 468 to 488 (VVAQLFNCMVGLLLIALLTWG) traverse the membrane as a helical segment. The Cytoplasmic portion of the chain corresponds to 489–541 (YIRYSGQYRELGGAIDSGAAYVLEQASSHIGNSTQAAVRDAVVGRPPADKKSQ).

Belongs to the TRAFAC class dynamin-like GTPase superfamily. GB1/RHD3 GTPase family. GB1 subfamily. In terms of assembly, monomeric and homodimeric. The homodimer, transiently formed by two molecules on opposing membranes, is the active form mediating ER membrane fusion. Interacts with ZFYVE27; both proteins are involved in endoplasmic reticulum tubular network organization. Interacts with REEP5; both proteins are involved in endoplasmic reticulum tubular network organization. Expressed in cardiomyocytes (at protein level).

It localises to the endoplasmic reticulum membrane. The catalysed reaction is GTP + H2O = GDP + phosphate + H(+). In terms of biological role, atlastin-3 (ATL3) is a membrane-anchored GTPase that mediates the GTP-dependent fusion of endoplasmic reticulum (ER) membranes, maintaining the continuous ER network. It facilitates the formation of three-way junctions where ER tubules intersect. Two atlastin-3 on neighboring ER tubules bind GTP and form loose homodimers through the GB1/RHD3-type G domains and 3HB regions. Upon GTP hydrolysis, the 3HB regions tighten, pulling the membranes together to drive their fusion. After fusion, the homodimer disassembles upon release of inorganic phosphate (Pi). Subsequently, GDP dissociates, resetting the monomers to a conformation ready for a new fusion cycle. The polypeptide is Atlastin-3 (Mus musculus (Mouse)).